The sequence spans 657 residues: Threonine--tRNA ligase (657 aa).

A TGS domain is found at 7–70; sequence DRQQVIITLP…TENARVSIIT (64 aa). The catalytic stretch occupies residues 253–555; that stretch reads DHRKLGAELG…LIEHTAGNFP (303 aa). Zn(2+) is bound by residues C351, H402, and H532.

It belongs to the class-II aminoacyl-tRNA synthetase family. As to quaternary structure, homodimer. The cofactor is Zn(2+).

It is found in the cytoplasm. The catalysed reaction is tRNA(Thr) + L-threonine + ATP = L-threonyl-tRNA(Thr) + AMP + diphosphate + H(+). Its function is as follows. Catalyzes the attachment of threonine to tRNA(Thr) in a two-step reaction: L-threonine is first activated by ATP to form Thr-AMP and then transferred to the acceptor end of tRNA(Thr). Also edits incorrectly charged L-seryl-tRNA(Thr). This is Threonine--tRNA ligase from Chlorobaculum tepidum (strain ATCC 49652 / DSM 12025 / NBRC 103806 / TLS) (Chlorobium tepidum).